The sequence spans 243 residues: CTD nuclear envelope phosphatase 1 homolog (243 aa).

A helical membrane pass occupies residues 11–27 (ALLLLLSKVWTCICFMF). Positions 56–223 (SLVQRKTLVL…LSLLPMLDAL (168 aa)) constitute an FCP1 homology domain.

It belongs to the dullard family.

The protein localises to the membrane. It carries out the reaction O-phospho-L-seryl-[protein] + H2O = L-seryl-[protein] + phosphate. The enzyme catalyses O-phospho-L-threonyl-[protein] + H2O = L-threonyl-[protein] + phosphate. Its function is as follows. Serine/threonine protein phosphatase that may dephosphorylate and activate lipin-like phosphatases. Lipins are phosphatidate phosphatases that catalyze the conversion of phosphatidic acid to diacylglycerol and control the metabolism of fatty acids at different levels. May indirectly modulate the lipid composition of nuclear and/or endoplasmic reticulum membranes and be required for proper nuclear membrane morphology and/or dynamics. May also indirectly regulate the production of lipid droplets and triacylglycerol. The chain is CTD nuclear envelope phosphatase 1 homolog (l(1)G0269) from Drosophila pseudoobscura pseudoobscura (Fruit fly).